Here is a 238-residue protein sequence, read N- to C-terminus: ATP synthase subunit a (238 aa).

5 helical membrane-spanning segments follow: residues 18–38 (LTLL…VFWA), 76–96 (YSLL…LGLF), 114–134 (NLAF…IEGV), 166–186 (SLAI…GLIV), and 193–213 (VYWW…SVFI).

Belongs to the ATPase A chain family. As to quaternary structure, F-type ATPases have 2 components, CF(1) - the catalytic core - and CF(0) - the membrane proton channel. CF(1) has five subunits: alpha(3), beta(3), gamma(1), delta(1), epsilon(1). CF(0) has three main subunits: a(1), b(2) and c(9-12). The alpha and beta chains form an alternating ring which encloses part of the gamma chain. CF(1) is attached to CF(0) by a central stalk formed by the gamma and epsilon chains, while a peripheral stalk is formed by the delta and b chains.

It localises to the cell membrane. Functionally, key component of the proton channel; it plays a direct role in the translocation of protons across the membrane. This is ATP synthase subunit a from Streptococcus pyogenes serotype M5 (strain Manfredo).